The sequence spans 638 residues: 1-deoxy-D-xylulose-5-phosphate synthase (638 aa).

Thiamine diphosphate contacts are provided by residues His-75 and 116-118 (AHS). A Mg(2+)-binding site is contributed by Asp-147. Residues 148 to 149 (GA), Asn-177, Tyr-288, and Glu-370 contribute to the thiamine diphosphate site. Asn-177 provides a ligand contact to Mg(2+).

This sequence belongs to the transketolase family. DXPS subfamily. Homodimer. The cofactor is Mg(2+). Requires thiamine diphosphate as cofactor.

It carries out the reaction D-glyceraldehyde 3-phosphate + pyruvate + H(+) = 1-deoxy-D-xylulose 5-phosphate + CO2. The protein operates within metabolic intermediate biosynthesis; 1-deoxy-D-xylulose 5-phosphate biosynthesis; 1-deoxy-D-xylulose 5-phosphate from D-glyceraldehyde 3-phosphate and pyruvate: step 1/1. Catalyzes the acyloin condensation reaction between C atoms 2 and 3 of pyruvate and glyceraldehyde 3-phosphate to yield 1-deoxy-D-xylulose-5-phosphate (DXP). This Cupriavidus taiwanensis (strain DSM 17343 / BCRC 17206 / CCUG 44338 / CIP 107171 / LMG 19424 / R1) (Ralstonia taiwanensis (strain LMG 19424)) protein is 1-deoxy-D-xylulose-5-phosphate synthase.